The primary structure comprises 398 residues: L-methionine gamma-lyase (398 aa).

Pyridoxal 5'-phosphate-binding positions include 59–61 and 89–90; these read YSR and GM. Residue Tyr114 participates in substrate binding. 208–210 is a binding site for pyridoxal 5'-phosphate; it reads SAT. An N6-(pyridoxal phosphate)lysine modification is found at Lys211. Residue Arg375 coordinates substrate.

Belongs to the trans-sulfuration enzymes family. L-methionine gamma-lyase subfamily. Homotetramer; dimer of active dimers. Pyridoxal 5'-phosphate is required as a cofactor.

It carries out the reaction L-methionine + H2O = methanethiol + 2-oxobutanoate + NH4(+). The catalysed reaction is L-homocysteine + H2O = 2-oxobutanoate + hydrogen sulfide + NH4(+) + H(+). With respect to regulation, irreversibly inactivated by DL-propargylglycine. Catalyzes the alpha,gamma-elimination of L-methionine to produce methanethiol, 2-oxobutanoate and ammonia. Is involved in L-methionine catabolism. In fact, shows a multicatalytic function since it also catalyzes gamma-replacement of L-methionine with thiol compounds, alpha,gamma-elimination and gamma-replacement reactions of L-homocysteine and its S-substituted derivatives, O-substituted-L-homoserines and DL-selenomethionine, and, to a lesser extent, alpha,beta-elimination and beta-replacement reactions of L-cysteine, S-methyl-L-cysteine, and O-acetyl-L-serine. Also catalyzes deamination and gamma-addition reactions of L-vinylglycine. Thus, the enzyme is able to cleave C-S, C-Se, and C-O bonds of sulfur, selenium, and oxygen amino acids, respectively. This Pseudomonas putida (Arthrobacter siderocapsulatus) protein is L-methionine gamma-lyase.